Consider the following 111-residue polypeptide: uncharacterized protein (111 aa).

Homodimer, or homotetramer.

This is an uncharacterized protein from Bacillus subtilis (strain 168).